The chain runs to 279 residues: Small ribosomal subunit protein uS2 (279 aa).

The interval 255–279 (LLAGATTAAPEAAAGEAAAAPEQSS) is disordered.

This sequence belongs to the universal ribosomal protein uS2 family.

This Mycolicibacterium gilvum (strain PYR-GCK) (Mycobacterium gilvum (strain PYR-GCK)) protein is Small ribosomal subunit protein uS2.